Reading from the N-terminus, the 459-residue chain is Trigger factor (459 aa).

The PPIase FKBP-type domain occupies 166–245 (GDFANIDLTA…VNSVKAEELP (80 aa)).

It belongs to the FKBP-type PPIase family. Tig subfamily.

It is found in the cytoplasm. It catalyses the reaction [protein]-peptidylproline (omega=180) = [protein]-peptidylproline (omega=0). Its function is as follows. Involved in protein export. Acts as a chaperone by maintaining the newly synthesized protein in an open conformation. Functions as a peptidyl-prolyl cis-trans isomerase. The protein is Trigger factor of Bifidobacterium longum subsp. infantis (strain ATCC 15697 / DSM 20088 / JCM 1222 / NCTC 11817 / S12).